A 200-amino-acid chain; its full sequence is Dephospho-CoA kinase (200 aa).

A DPCK domain is found at 3-200 (VLGLTGSIGM…LSGKPAAATR (198 aa)). 11-16 (GMGKTT) is an ATP binding site.

This sequence belongs to the CoaE family.

The protein resides in the cytoplasm. It catalyses the reaction 3'-dephospho-CoA + ATP = ADP + CoA + H(+). It functions in the pathway cofactor biosynthesis; coenzyme A biosynthesis; CoA from (R)-pantothenate: step 5/5. Its function is as follows. Catalyzes the phosphorylation of the 3'-hydroxyl group of dephosphocoenzyme A to form coenzyme A. This Brucella abortus (strain 2308) protein is Dephospho-CoA kinase.